We begin with the raw amino-acid sequence, 1906 residues long: Replicase polyprotein (1906 aa).

The region spanning 513–692 is the SF3 helicase domain; that stretch reads MRYLTEVFKS…DEFTKMCWSK (180 aa). Residue 544 to 551 coordinates ATP; sequence GESGRGKS. Positions 1124–1350 are protease; sequence KDQVAQKLIT…KDLIRAFSKI (227 aa). Positions 1126-1343 constitute a Peptidase C3 domain; that stretch reads QVAQKLITNR…YAESISQKDL (218 aa). Residues H1171, E1213, and C1305 each act as for picornain 3C-like protease activity in the active site. The RdRp catalytic domain maps to 1638–1772; the sequence is PKVIAGDFST…NFSDEVSEWF (135 aa).

In terms of processing, specific enzymatic cleavages in vivo by the viral protease yield a variety of precursors and mature proteins.

The enzyme catalyses RNA(n) + a ribonucleoside 5'-triphosphate = RNA(n+1) + diphosphate. In terms of biological role, replicase polyprotein contains helicase, VPg, protease and RNA-directed RNA polymerase functions. Its function is as follows. RNA-directed RNA polymerase replicates genomic and antigenomic RNA and transcribes the vial genome. Functionally, the protease generates mature viral proteins from the precursor polyprotein. VPg is covalently linked to the 5'-end of genomic RNA. This Apis mellifera (Honeybee) protein is Replicase polyprotein.